Reading from the N-terminus, the 4662-residue chain is Protein PF3D7_1417600 (4662 aa).

The next 2 helical transmembrane spans lie at 136-156 (INYV…YLYI) and 161-181 (YIYY…FHII). The LRR 1 repeat unit spans residues 466–489 (IKNIDSINKNHKRLIKISNYNITN). The tract at residues 583-710 (YRNDGDVNNK…KMKPDNTLNE (128 aa)) is disordered. Low complexity predominate over residues 590–644 (NNKNGYNNNEHSNSSNERSNNNGDNNNNNHNNNNHNNNHHNNGSNNHNGNNNSNN). A compositionally biased stretch (basic and acidic residues) spans 650 to 666 (DDDKKGNDKKNEDKDDE). A compositionally biased stretch (basic residues) spans 690–701 (KKRKEKSKNKNK). The HSA domain occupies 783–856 (YKPTEPVNIF…ISNDIKMFWF (74 aa)). Residues 942–967 (GLMNKMSHQNGKNNNHNDYNNKCEDN) are disordered. The stretch at 1150 to 1172 (NVHINHIQYDDNNLYYNDDLYNY) is one LRR 2 repeat. A compositionally biased stretch (low complexity) spans 1505-1524 (NNNNNSNNNNSNSNNNSNSN). Disordered regions lie at residues 1505 to 1540 (NNNN…NNSS) and 1705 to 1761 (KINS…NEKD). Positions 1710-1761 (NNDKSDDKNDDKNDKKNDGKNDKNDEKDDNKTGEKGDNKIGEKDDNKINEKD) are enriched in basic and acidic residues. LRR repeat units lie at residues 2063–2086 (ITKV…MFNK) and 2129–2153 (DEEI…NVKD). Residues 2228–2261 (KNKSNKKKRAKKNIKLGEEENESECNNEGECNNE) form a disordered region. The span at 2230–2241 (KSNKKKRAKKNI) shows a compositional bias: basic residues. Residues 2246 to 2261 (EENESECNNEGECNNE) are compositionally biased toward acidic residues. LRR repeat units follow at residues 2672–2695 (LDKL…KTID), 2773–2796 (NTVL…TVDI), 2864–2888 (INDD…VNNN), and 2904–2929 (ANNI…YNNS). The interval 2956 to 2975 (MNNTKQRSHSSYHTSFPMQN) is disordered. 6 LRR repeats span residues 3377 to 3400 (QNNM…NITM), 3438 to 3461 (NNSM…YNNS), 3756 to 3781 (SQRL…NINN), 3935 to 3960 (QPNI…NINN), 3965 to 3985 (QPNI…SMNQ), and 3986 to 4010 (PNIN…NINN). A coiled-coil region spans residues 4203–4272 (DMNQQERLQQ…ERLQQKWEQQ (70 aa)). 2 LRR repeats span residues 4296-4321 (YQEL…IFLK) and 4333-4357 (QKMH…SLQQ). Positions 4384–4412 (QMNHQQINKHQMNQQQMNKQQMNQQQINQ) are disordered.

It localises to the membrane. This Plasmodium falciparum (isolate 3D7) protein is Protein PF3D7_1417600.